The following is a 226-amino-acid chain: 2,3-bisphosphoglycerate-dependent phosphoglycerate mutase (226 aa).

Residues 8–15, 21–22, R58, 112–115, K123, 139–140, and 183–184 contribute to the substrate site; these read RHGQSQWN, TG, ERMY, RR, and GN. H9 (tele-phosphohistidine intermediate) is an active-site residue. E112 functions as the Proton donor/acceptor in the catalytic mechanism.

It belongs to the phosphoglycerate mutase family. BPG-dependent PGAM subfamily.

The enzyme catalyses (2R)-2-phosphoglycerate = (2R)-3-phosphoglycerate. Its pathway is carbohydrate degradation; glycolysis; pyruvate from D-glyceraldehyde 3-phosphate: step 3/5. Catalyzes the interconversion of 2-phosphoglycerate and 3-phosphoglycerate. The protein is 2,3-bisphosphoglycerate-dependent phosphoglycerate mutase of Protochlamydia amoebophila (strain UWE25).